Consider the following 2275-residue polypeptide: MSKRQKEFHDSLANEKTRVRLYKSGKNWVKSGIKEIEMFKIMGLPFISHSLVSQDNQSISKKMTGYGLKTTAVIGGAFTVNMLHDQQAFAASDAPLTSELNTQSETVGNQNSTTIEASTSTADSTSVTKNSSSVQTSNSDTVSSEKSEKVTSTTNSTSNQQEKLTSTSESTSSKNTTSSSDTKSVASTSSTEQPINTSTNQSTASNNTSQSTTPSSVNLNKTSTTSTSTAPVKLRTFSRLAMSTFASAATTTAVTANTITVNKDNLKQYMTTSGNATYDQSTGIVTLTQDAYSQKGAITLGTRIDSNKSFHFSGKVNLGNKYEGNGNGGDGIGFAFSPGVLGETGLNGAAVGIGGLSNAFGFKLDTYHNTSKPNSAAKANADPSNVAGGGAFGAFVTTDSYGVATTYTSSSTADNAAKLKVQPTNNTFQDFDINYNGDTKVMTVTYAGQTWTRNISDWIAKSGTTNFSLSMTASTGGATNLQQVQFGTFEYTESAVTQVRYVDVTTGKDIIPPKTYSGNVDQVVTIDNQQSALTAKGYNYTSVDSSYASTYNDTNKTVKMTNAGQSVTYYFTDVKAPTVTVGNQTIEVGKTMNPVVLTTTDNGTGTVTNTVTGLPSGLSYDSATNSIIGTPTKIGQSTVTVVSTDQANNKSTTTFTINVVDTTAPTVTPIGDQSSEVYSPISPIKIATQDNSGNAVTNTVTGLPSGLTFDSTNNTISGTPTNIGTSTITIVSTDASGNKTTTTFKYEVTRNSMSDSVSTSGSTQQSQSVSTSKADSQSASTSTSGSIVVSTSASTSKSTSVSLSDSVSASKSLSTSESNSVSSSTSTSLVNSQSVSSSMSDSASKSTSLSDSISNSSSTEKSESLSTSTSDSLRTSTSLSDSLSMSTSGSLSKSQSLSTSTSESSSTSASLSDSTSNAISTSESLSESASTSDSISISNSIANSQSASTSKSDSQSTSISLSTSDSKSMSTSESLSDSTSTSGSVSGSLSIAASQSVSTSTSDSMSTSEIVSDSISTSGSLSASDSKSMSVSSSMSTSQSGSTSESLSDSQSTSDSDSKSLSLSTSQSGSTSTSTSTSASVRTSESQSTSGSMSASQSDSMSISTSFSDSTSDSKSASTASSESISQSASTSTSGSVSTSTSLSTSNSERTSTSMSDSTSLSTSESDSISESTSTSDSISEAISASESTFISLSESNSTSDSESQSASAFLSESLSESTSESTSESVSSSTSESTSLSDSTSESGSTSTSLSNSTSGSASISTSTSISESTSTFKSESVSTSLSMSTSTSLSDSTSLSTSLSDSTSDSKSDSLSTSMSTSDSISTSKSDSISTSTSLSGSTSESESDSTSSSESKSDSTSMSISMSQSTSGSTSTSTSTSLSDSTSTSLSLSASMNQSGVDSNSASQSASNSTSTSTSESDSQSTSSYTSQSTSQSESTSTSTSLSDSTSISKSTSQSGSVSTSASLSGSESESDSQSISTSASESTSESASTSLSDSTSTSNSGSASTSTSLSNSASASESDSSSTSLSDSTSASMQSSESDSQSTSASLSDSLSTSTSNRMSTIASLSTSVSTSESGSTSESTSESDSTSTSLSDSQSTSRSTSASGSASTSTSTSDSRSTSASTSTSMRTSTSDSQSMSLSTSTSTSMSDSTSLSDSVSDSTSDSTSASTSGSMSVSISLSDSTSTSTSASEVMSASISDSQSMSESVNDSESVSESNSESDSKSMSGSTSVSDSGSLSVSTSLRKSESVSESSSLSGSQSMSDSVSTSDSSSLSVSTSLRSSESVSESDSLSDSKSTSGSTSTSTSGSLSTSTSLSGSESVSESTSLSDSISMSDSTSTSDSDSLSGSISLSGSTSLSTSDSLSDSKSLSSSQSMSGSESTSTSVSDSQSSSTSNSQFDSMSISASESDSMSTSDSSSISGSNSTSTSLSTSDSMSGSVSVSTSTSLSDSISGSTSLSDSSSTSTSTSLSDSMSQSQSTSTSASGSLSTSISTSMSMSASTSSSQSTSVSTSLSTSDSISDSTSISISGSQSTVESESTSDSTSISDSESLSTSDSDSTSTSTSDSTSGSTSTSISESLSTSGSGSTSVSDSTSMSESDSTSVSMSQSMSGSTYNSTSVSDSESVSTSTSTSLSTSDSTSTSESLSTSMSGSQSISDSTSTSMSGSTSTSESNSMHPSDSMSMHHTHSTSTSRLSSEATTSTSESQSTLSATSEVTKHNGTPAQSEKRLPDTGDSIKQNGLLGGVMTLLVGLGLMKRKKKKDENDQDDSQA.

The signal sequence occupies residues 1–89 (MSKRQKEFHD…VNMLHDQQAF (89 aa)). Residues 90–264 (AASDAPLTSE…TANTITVNKD (175 aa)) form a serine-rich repeat region 1, SRR1 region. The span at 100–111 (LNTQSETVGNQN) shows a compositional bias: polar residues. Disordered stretches follow at residues 100-229 (LNTQ…STST) and 751-2247 (NSMS…GLLG). Residues 112–128 (STTIEASTSTADSTSVT) show a composition bias toward low complexity. The span at 129–140 (KNSSSVQTSNSD) shows a compositional bias: polar residues. The span at 150–229 (VTSTTNSTSN…NKTSTTSTST (80 aa)) shows a compositional bias: low complexity. The segment at 265–751 (NLKQYMTTSG…TTFKYEVTRN (487 aa)) is non-repeat region (NRR). 2 stretches are compositionally biased toward low complexity: residues 752-1392 (SMSD…LSLS) and 1402-2218 (SNSA…ATSE). Residues 752–2236 (SMSDSVSTSG…AQSEKRLPDT (1485 aa)) are serine-rich repeat region 2, SRR2. The LPXTG sorting signal motif lies at 2233–2237 (LPDTG). Thr2236 bears the Pentaglycyl murein peptidoglycan amidated threonine mark. A propeptide spans 2237-2275 (GDSIKQNGLLGGVMTLLVGLGLMKRKKKKDENDQDDSQA) (removed by sortase).

The protein belongs to the serine-rich repeat protein (SRRP) family. In terms of assembly, interacts with human gp-340 (DMBT1). Proteolytically cleaved by a metalloprotease. Post-translationally, glycosylated. It is probable that most of the Ser residues in SSR1 and SSR2 are O-GlcNAcylated. Sequential glycosylation by sugar transferases are able to generate complex sugar polymorphisms.

It localises to the secreted. Its subcellular location is the cell wall. Functionally, mediates binding to human platelets, possibly through a receptor-ligand interaction. Probably associated with virulence in endovascular infection. Interacts with host (human) gp-340 via the non-repeat region (NRR or binding region). Binding is inhibited by N-acetylneuraminic acid (NeuAc). The polypeptide is Serine-rich adhesin for platelets (sraP) (Staphylococcus aureus (strain MW2)).